The sequence spans 155 residues: V-type proton ATPase 16 kDa proteolipid subunit c (155 aa).

Residues 1-10 (MSEAKSGPEY) lie on the Lumenal side of the membrane. The helical transmembrane segment at 11–33 (ASFFAVMGASAAMVFSALGAAYG) threads the bilayer. Residues 34-55 (TAKSGTGIAAMSVMRPEMIMKS) lie on the Cytoplasmic side of the membrane. The chain crosses the membrane as a helical span at residues 56–76 (IIPVVMAGIIAIYGLVVAVLI). Residues 77–92 (ANSLNDGISLYRSFLQ) lie on the Lumenal side of the membrane. A helical transmembrane segment spans residues 93-114 (LGAGLSVGLSGLAAGFAIGIVG). Over 115 to 131 (DAGVRGTAQQPRLFVGM) the chain is Cytoplasmic. The helical transmembrane segment at 132–152 (ILILIFAEVLGLYGLIVALIL) threads the bilayer. Residues 153 to 155 (STK) are Lumenal-facing.

It belongs to the V-ATPase proteolipid subunit family. In terms of assembly, V-ATPase is a heteromultimeric enzyme made up of two complexes: the ATP-hydrolytic V1 complex and the proton translocation V0 complex. The V1 complex consists of three catalytic AB heterodimers that form a heterohexamer, three peripheral stalks each consisting of EG heterodimers, one central rotor including subunits D and F, and the regulatory subunits C and H. The proton translocation complex V0 consists of the proton transport subunit a, a ring of proteolipid subunits c9c'', rotary subunit d, subunits e and f, and the accessory subunits ATP6AP1/Ac45 and ATP6AP2/PRR. Interacts with the V0 complex V-ATPase subunit a4 ATP6V0A4. Interacts with LASS2. Interacts with RNF182; this interaction leads to ubiquitination and degradation via the proteasome pathway. In terms of processing, ubiquitinated by RNF182, leading to its degradation via the ubiquitin-proteasome pathway.

Its subcellular location is the cytoplasmic vesicle. The protein localises to the clathrin-coated vesicle membrane. It localises to the secretory vesicle. The protein resides in the synaptic vesicle membrane. Proton-conducting pore forming subunit of the V0 complex of vacuolar(H+)-ATPase (V-ATPase), a multisubunit enzyme composed of a peripheral complex (V1) that hydrolyzes ATP and a membrane integral complex (V0) that translocates protons. V-ATPase is responsible for acidifying and maintaining the pH of intracellular compartments and in some cell types, is targeted to the plasma membrane, where it is responsible for acidifying the extracellular environment. This is V-type proton ATPase 16 kDa proteolipid subunit c (ATP6V0C) from Ovis aries (Sheep).